Here is a 267-residue protein sequence, read N- to C-terminus: Glutamate 5-kinase (267 aa).

Lysine 14 lines the ATP pocket. Substrate-binding residues include serine 54, aspartate 141, and asparagine 157. ATP is bound by residues 177 to 178 (SD) and 219 to 225 (TGGMLSK).

Belongs to the glutamate 5-kinase family.

The protein localises to the cytoplasm. The enzyme catalyses L-glutamate + ATP = L-glutamyl 5-phosphate + ADP. It participates in amino-acid biosynthesis; L-proline biosynthesis; L-glutamate 5-semialdehyde from L-glutamate: step 1/2. Catalyzes the transfer of a phosphate group to glutamate to form L-glutamate 5-phosphate. The sequence is that of Glutamate 5-kinase from Streptococcus agalactiae serotype Ia (strain ATCC 27591 / A909 / CDC SS700).